We begin with the raw amino-acid sequence, 190 residues long: Glutathione peroxidase 2 (190 aa).

Residue Sec40 is part of the active site. Sec40 is a non-standard amino acid (selenocysteine).

It belongs to the glutathione peroxidase family. As to quaternary structure, homotetramer.

Its subcellular location is the cytoplasm. The protein resides in the cytosol. It catalyses the reaction 2 glutathione + H2O2 = glutathione disulfide + 2 H2O. It carries out the reaction a hydroperoxy polyunsaturated fatty acid + 2 glutathione = a hydroxy polyunsaturated fatty acid + glutathione disulfide + H2O. The catalysed reaction is tert-butyl hydroperoxide + 2 glutathione = tert-butanol + glutathione disulfide + H2O. The enzyme catalyses cumene hydroperoxide + 2 glutathione = 2-phenylpropan-2-ol + glutathione disulfide + H2O. It catalyses the reaction (13S)-hydroperoxy-(9Z,11E)-octadecadienoate + 2 glutathione = (13S)-hydroxy-(9Z,11E)-octadecadienoate + glutathione disulfide + H2O. It carries out the reaction (5S)-hydroperoxy-(6E,8Z,11Z,14Z)-eicosatetraenoate + 2 glutathione = (5S)-hydroxy-(6E,8Z,11Z,14Z)-eicosatetraenoate + glutathione disulfide + H2O. The catalysed reaction is (12R)-hydroperoxy-(5Z,8Z,10E,14Z)-eicosatetraenoate + 2 glutathione = (12R)-hydroxy-(5Z,8Z,10E,14Z)-eicosatetraenoate + glutathione disulfide + H2O. The enzyme catalyses (15S)-hydroperoxy-(5Z,8Z,11Z,13E)-eicosatetraenoate + 2 glutathione = (15S)-hydroxy-(5Z,8Z,11Z,13E)-eicosatetraenoate + glutathione disulfide + H2O. In terms of biological role, catalyzes the reduction of hydroperoxides in a glutathione-dependent manner thus regulating cellular redox homeostasis. Can reduce small soluble hydroperoxides such as H2O2, cumene hydroperoxide and tert-butyl hydroperoxide, as well as several fatty acid-derived hydroperoxides. Cannot reduce phosphatidycholine hydroperoxide. The polypeptide is Glutathione peroxidase 2 (GPX2) (Sapajus apella (Brown-capped capuchin)).